Consider the following 81-residue polypeptide: MASNSMSSSASWTRKENKLFERALATYDQDTPDRWHNVARAVGGKSAEEVRRHYELLIRDVNDIESGRYPHPNYRSNGNNH.

The SANT domain occupies 7 to 62; that stretch reads SSSASWTRKENKLFERALATYDQDTPDRWHNVARAVGGKSAEEVRRHYELLIRDVN.

In terms of tissue distribution, expressed just outside the vascular bundles in the rosette stem and the leaf traces. Not detected in floral primordia.

It localises to the nucleus. Probable transcription factor. This chain is Protein RADIALIS-like 3 (RL3), found in Arabidopsis thaliana (Mouse-ear cress).